Reading from the N-terminus, the 637-residue chain is 3D-(3,5/4)-trihydroxycyclohexane-1,2-dione hydrolase (637 aa).

A thiamine diphosphate-binding site is contributed by E65. A thiamine pyrophosphate binding region spans residues 441–521; the sequence is SLPGDLQRLW…INVLLFDNSG (81 aa). Mg(2+) is bound by residues D492 and N519.

Belongs to the TPP enzyme family. It depends on Mg(2+) as a cofactor. The cofactor is thiamine diphosphate.

It carries out the reaction 3D-3,5/4-trihydroxycyclohexane-1,2-dione + H2O = 5-deoxy-D-glucuronate + H(+). The protein operates within polyol metabolism; myo-inositol degradation into acetyl-CoA; acetyl-CoA from myo-inositol: step 3/7. Functionally, involved in the cleavage of the C1-C2 bond of 3D-(3,5/4)-trihydroxycyclohexane-1,2-dione (THcHDO) to yield 5-deoxy-glucuronate (5DG). The chain is 3D-(3,5/4)-trihydroxycyclohexane-1,2-dione hydrolase from Halalkalibacterium halodurans (strain ATCC BAA-125 / DSM 18197 / FERM 7344 / JCM 9153 / C-125) (Bacillus halodurans).